A 535-amino-acid polypeptide reads, in one-letter code: Sucrose transport protein SUT5 (535 aa).

Over 1–53 the chain is Cytoplasmic; it reads MEEGRRGDREAKSAAGWTALSTTKTTLEEKRRLQANGSVGGDAGTSGFRRIVR. Residues 54–74 traverse the membrane as a helical segment; that stretch reads LFFACMVAGGIQYGWALQLSL. Residues 75 to 87 lie on the Extracellular side of the membrane; it reads LSPYSQTLGISHS. The chain crosses the membrane as a helical span at residues 88-108; the sequence is YVSLTWICGPIAGFVVQPIVG. Over 109 to 122 the chain is Cytoplasmic; that stretch reads YYSDRCTMKMGRRR. The chain crosses the membrane as a helical span at residues 123-143; sequence PFILVGCLIICISVMIIGFSA. Over 144–163 the chain is Extracellular; the sequence is DIGRHLGDTKEHCSTYTGPR. A helical membrane pass occupies residues 164–184; it reads WSAAMVYIVGFWFLDFANNTV. The Cytoplasmic portion of the chain corresponds to 185–203; the sequence is QGPARAMMADLSAGHHGPN. The chain crosses the membrane as a helical span at residues 204-224; sequence VGQSIFSLWMAIGSVLGYLSG. Residues 225–249 are Extracellular-facing; that stretch reads ANGKWHEWFPWLKTAACCDACANLK. Residues 250–270 traverse the membrane as a helical segment; the sequence is GAFFTAVLLIVVSMTVTMYLA. Over 271–302 the chain is Cytoplasmic; sequence DEMPLDKQDVDTSGGGGCAVFVDLFKSLRNLP. A helical transmembrane segment spans residues 303 to 323; the sequence is PAMFKVLAVTAVTWLSWFPFI. Over 324-354 the chain is Extracellular; the sequence is QYNTDWMGREIYHGEPQGTAAKADVYDAGVR. Residues 355-375 traverse the membrane as a helical segment; it reads EGAMGLLFCSVALGVTSFVIP. Topologically, residues 376-384 are cytoplasmic; it reads KLCRRLTSK. A helical membrane pass occupies residues 385-405; the sequence is VVWSISNFLVFALMAVMVAVG. Over 406–429 the chain is Extracellular; it reads MVSMRGYRPSLAAGLTGPDPTLKA. Residues 430–450 form a helical membrane-spanning segment; it reads VALVVFALIGIPQAVLFSVPW. Topologically, residues 451 to 465 are cytoplasmic; that stretch reads AVASEVTAEEGGGQG. A helical membrane pass occupies residues 466–486; it reads LAIGVLNIAIVVPQLVIALTA. Topologically, residues 487 to 498 are extracellular; the sequence is GPIDGAFNKGNT. Residues 499 to 519 form a helical membrane-spanning segment; the sequence is PAFGIGGAFAFICGVLALIWL. Residues 520 to 535 lie on the Cytoplasmic side of the membrane; the sequence is PKTRGVSNAAVVAGGH.

The protein belongs to the glycoside-pentoside-hexuronide (GPH) cation symporter transporter (TC 2.A.2.4) family. As to quaternary structure, homodimer.

Its subcellular location is the cell membrane. It participates in glycan biosynthesis; sucrose metabolism. In terms of biological role, responsible for the transport of sucrose into the cell, with the concomitant uptake of protons (symport system). May also transport other glucosides. The sequence is that of Sucrose transport protein SUT5 (SUT5) from Oryza sativa subsp. indica (Rice).